Reading from the N-terminus, the 168-residue chain is Inorganic pyrophosphatase (168 aa).

Substrate contacts are provided by Lys-23, Arg-37, and Tyr-49. Mg(2+) contacts are provided by Asp-59, Asp-64, and Asp-96. Tyr-133 lines the substrate pocket.

This sequence belongs to the PPase family. In terms of assembly, homohexamer. Mg(2+) is required as a cofactor.

The protein localises to the cytoplasm. The catalysed reaction is diphosphate + H2O = 2 phosphate + H(+). Its function is as follows. Catalyzes the hydrolysis of inorganic pyrophosphate (PPi) forming two phosphate ions. The protein is Inorganic pyrophosphatase of Methanosarcina acetivorans (strain ATCC 35395 / DSM 2834 / JCM 12185 / C2A).